We begin with the raw amino-acid sequence, 188 residues long: dCTP deaminase (188 aa).

Residues 111–116 (KSTYAR), 135–137 (TLE), Gln156, Tyr170, and Gln180 each bind dCTP. Glu137 (proton donor/acceptor) is an active-site residue.

The protein belongs to the dCTP deaminase family. As to quaternary structure, homotrimer.

The catalysed reaction is dCTP + H2O + H(+) = dUTP + NH4(+). It participates in pyrimidine metabolism; dUMP biosynthesis; dUMP from dCTP (dUTP route): step 1/2. Its function is as follows. Catalyzes the deamination of dCTP to dUTP. The sequence is that of dCTP deaminase from Thiobacillus denitrificans (strain ATCC 25259 / T1).